We begin with the raw amino-acid sequence, 200 residues long: MNFINETNEEKKNKTNDDDALMQKFLNTRQIILAGEINKELSEKIVRQLLLMESLSATKPIYIYIDSPGGDADAGFAIFDMIRFIKAPVYTIGMGLVASAASIILLAASKERRFGMPNSHYLIHQPLSGIKGVATEIEIHAKELEKMRVKINKLIAEETGTDEKKVAKDTDRDCWLNAKESVEYGLISKIAKNRKDIPEK.

The active-site Nucleophile is the Ser-99. His-124 is an active-site residue.

This sequence belongs to the peptidase S14 family. As to quaternary structure, fourteen ClpP subunits assemble into 2 heptameric rings which stack back to back to give a disk-like structure with a central cavity, resembling the structure of eukaryotic proteasomes.

The protein resides in the cytoplasm. It catalyses the reaction Hydrolysis of proteins to small peptides in the presence of ATP and magnesium. alpha-casein is the usual test substrate. In the absence of ATP, only oligopeptides shorter than five residues are hydrolyzed (such as succinyl-Leu-Tyr-|-NHMec, and Leu-Tyr-Leu-|-Tyr-Trp, in which cleavage of the -Tyr-|-Leu- and -Tyr-|-Trp bonds also occurs).. Its function is as follows. Cleaves peptides in various proteins in a process that requires ATP hydrolysis. Has a chymotrypsin-like activity. Plays a major role in the degradation of misfolded proteins. The polypeptide is ATP-dependent Clp protease proteolytic subunit 2 (Treponema denticola (strain ATCC 35405 / DSM 14222 / CIP 103919 / JCM 8153 / KCTC 15104)).